Consider the following 152-residue polypeptide: Small ribosomal subunit protein uS11 (152 aa).

The segment at 133-152 (VTPIPTDSTRRKSGHRGRRL) is disordered. Over residues 143–152 (RKSGHRGRRL) the composition is skewed to basic residues.

Belongs to the universal ribosomal protein uS11 family. In terms of assembly, component of the small ribosomal subunit. Part of the small subunit (SSU) processome, composed of more than 70 proteins and the RNA chaperone small nucleolar RNA (snoRNA) U3.

The protein localises to the cytoplasm. The protein resides in the nucleus. Its subcellular location is the nucleolus. Its function is as follows. Component of the small ribosomal subunit. The ribosome is a large ribonucleoprotein complex responsible for the synthesis of proteins in the cell. Part of the small subunit (SSU) processome, first precursor of the small eukaryotic ribosomal subunit. During the assembly of the SSU processome in the nucleolus, many ribosome biogenesis factors, an RNA chaperone and ribosomal proteins associate with the nascent pre-rRNA and work in concert to generate RNA folding, modifications, rearrangements and cleavage as well as targeted degradation of pre-ribosomal RNA by the RNA exosome. The polypeptide is Small ribosomal subunit protein uS11 (rps14) (Dictyostelium discoideum (Social amoeba)).